The following is a 271-amino-acid chain: Formamidopyrimidine-DNA glycosylase (271 aa).

The active-site Schiff-base intermediate with DNA is P2. Catalysis depends on E3, which acts as the Proton donor. K57 (proton donor; for beta-elimination activity) is an active-site residue. H90, R109, and K151 together coordinate DNA. An FPG-type zinc finger spans residues H236 to T270. The active-site Proton donor; for delta-elimination activity is the R260.

The protein belongs to the FPG family. Monomer. Zn(2+) is required as a cofactor.

The catalysed reaction is Hydrolysis of DNA containing ring-opened 7-methylguanine residues, releasing 2,6-diamino-4-hydroxy-5-(N-methyl)formamidopyrimidine.. The enzyme catalyses 2'-deoxyribonucleotide-(2'-deoxyribose 5'-phosphate)-2'-deoxyribonucleotide-DNA = a 3'-end 2'-deoxyribonucleotide-(2,3-dehydro-2,3-deoxyribose 5'-phosphate)-DNA + a 5'-end 5'-phospho-2'-deoxyribonucleoside-DNA + H(+). Involved in base excision repair of DNA damaged by oxidation or by mutagenic agents. Acts as a DNA glycosylase that recognizes and removes damaged bases. Has a preference for oxidized purines, such as 7,8-dihydro-8-oxoguanine (8-oxoG). Has AP (apurinic/apyrimidinic) lyase activity and introduces nicks in the DNA strand. Cleaves the DNA backbone by beta-delta elimination to generate a single-strand break at the site of the removed base with both 3'- and 5'-phosphates. The sequence is that of Formamidopyrimidine-DNA glycosylase from Shewanella woodyi (strain ATCC 51908 / MS32).